Reading from the N-terminus, the 206-residue chain is Holliday junction branch migration complex subunit RuvA (206 aa).

The segment at Met1–Ser63 is domain I. The tract at residues Thr64 to Thr142 is domain II. Residues Ile143 to Gly150 form a flexible linker region. The tract at residues Asn151–Arg206 is domain III.

It belongs to the RuvA family. As to quaternary structure, homotetramer. Forms an RuvA(8)-RuvB(12)-Holliday junction (HJ) complex. HJ DNA is sandwiched between 2 RuvA tetramers; dsDNA enters through RuvA and exits via RuvB. An RuvB hexamer assembles on each DNA strand where it exits the tetramer. Each RuvB hexamer is contacted by two RuvA subunits (via domain III) on 2 adjacent RuvB subunits; this complex drives branch migration. In the full resolvosome a probable DNA-RuvA(4)-RuvB(12)-RuvC(2) complex forms which resolves the HJ.

The protein localises to the cytoplasm. Its function is as follows. The RuvA-RuvB-RuvC complex processes Holliday junction (HJ) DNA during genetic recombination and DNA repair, while the RuvA-RuvB complex plays an important role in the rescue of blocked DNA replication forks via replication fork reversal (RFR). RuvA specifically binds to HJ cruciform DNA, conferring on it an open structure. The RuvB hexamer acts as an ATP-dependent pump, pulling dsDNA into and through the RuvAB complex. HJ branch migration allows RuvC to scan DNA until it finds its consensus sequence, where it cleaves and resolves the cruciform DNA. In Corynebacterium urealyticum (strain ATCC 43042 / DSM 7109), this protein is Holliday junction branch migration complex subunit RuvA.